Consider the following 259-residue polypeptide: Imidazole glycerol phosphate synthase subunit HisF (259 aa).

Catalysis depends on residues aspartate 11 and aspartate 130.

This sequence belongs to the HisA/HisF family. As to quaternary structure, heterodimer of HisH and HisF.

It localises to the cytoplasm. The enzyme catalyses 5-[(5-phospho-1-deoxy-D-ribulos-1-ylimino)methylamino]-1-(5-phospho-beta-D-ribosyl)imidazole-4-carboxamide + L-glutamine = D-erythro-1-(imidazol-4-yl)glycerol 3-phosphate + 5-amino-1-(5-phospho-beta-D-ribosyl)imidazole-4-carboxamide + L-glutamate + H(+). It participates in amino-acid biosynthesis; L-histidine biosynthesis; L-histidine from 5-phospho-alpha-D-ribose 1-diphosphate: step 5/9. IGPS catalyzes the conversion of PRFAR and glutamine to IGP, AICAR and glutamate. The HisF subunit catalyzes the cyclization activity that produces IGP and AICAR from PRFAR using the ammonia provided by the HisH subunit. The polypeptide is Imidazole glycerol phosphate synthase subunit HisF (Acidovorax ebreus (strain TPSY) (Diaphorobacter sp. (strain TPSY))).